We begin with the raw amino-acid sequence, 490 residues long: Mitochondrial-processing peptidase subunit beta (490 aa).

Residues 1–46 constitute a mitochondrion transit peptide; it reads MAAAAVARAVLFSAARRRLCGFTERLLIGGAAGRSLYFGGNRLRST. Residue His-102 coordinates Zn(2+). Glu-105 (proton acceptor) is an active-site residue. Residues His-106 and Glu-182 each coordinate Zn(2+).

It belongs to the peptidase M16 family. In terms of assembly, heterodimer of PMPCA (alpha) and PMPCB (beta) subunits, forming the mitochondrial processing protease (MPP) in which PMPCA is involved in substrate recognition and binding and PMPCB is the catalytic subunit. Requires Zn(2+) as cofactor.

The protein resides in the mitochondrion matrix. The catalysed reaction is Release of N-terminal transit peptides from precursor proteins imported into the mitochondrion, typically with Arg in position P2.. Its activity is regulated as follows. Binding to PMPCA is required for catalytic activity. Functionally, catalytic subunit of the essential mitochondrial processing protease (MPP), which cleaves the mitochondrial sequence off newly imported precursors proteins. Preferentially, cleaves after an arginine at position P2. Required for PINK1 turnover by coupling PINK1 mitochondrial import and cleavage, which results in subsequent PINK1 proteolysis. The sequence is that of Mitochondrial-processing peptidase subunit beta (PMPCB) from Bos taurus (Bovine).